Consider the following 1116-residue polypeptide: Error-prone DNA polymerase (1116 aa).

It belongs to the DNA polymerase type-C family. DnaE2 subfamily.

It is found in the cytoplasm. It catalyses the reaction DNA(n) + a 2'-deoxyribonucleoside 5'-triphosphate = DNA(n+1) + diphosphate. Its function is as follows. DNA polymerase involved in damage-induced mutagenesis and translesion synthesis (TLS). It is not the major replicative DNA polymerase. The sequence is that of Error-prone DNA polymerase from Sinorhizobium medicae (strain WSM419) (Ensifer medicae).